The following is a 529-amino-acid chain: uncharacterized protein (529 aa).

A DNA-binding region (zn(2)-C6 fungal-type) is located at residues 26-58 (CDSCRKQKTRCLAGSVEDENRACLRCRSLNMDC).

The protein localises to the nucleus. This is an uncharacterized protein from Schizosaccharomyces pombe (strain 972 / ATCC 24843) (Fission yeast).